We begin with the raw amino-acid sequence, 182 residues long: Isopentenyl-diphosphate Delta-isomerase (182 aa).

Mn(2+) is bound by residues histidine 25 and histidine 32. A Nudix hydrolase domain is found at 30 to 164 (LLHLAFSSWL…PWAFSPWMVM (135 aa)). Residue cysteine 67 is part of the active site. Histidine 69 is a Mn(2+) binding site. A Mg(2+)-binding site is contributed by glutamate 87. Mn(2+) is bound by residues glutamate 114 and glutamate 116. Glutamate 116 is a catalytic residue.

The protein belongs to the IPP isomerase type 1 family. As to quaternary structure, homodimer. It depends on Mg(2+) as a cofactor. Mn(2+) serves as cofactor.

The protein localises to the cytoplasm. The catalysed reaction is isopentenyl diphosphate = dimethylallyl diphosphate. It participates in isoprenoid biosynthesis; dimethylallyl diphosphate biosynthesis; dimethylallyl diphosphate from isopentenyl diphosphate: step 1/1. Its function is as follows. Catalyzes the 1,3-allylic rearrangement of the homoallylic substrate isopentenyl (IPP) to its highly electrophilic allylic isomer, dimethylallyl diphosphate (DMAPP). In Escherichia coli O45:K1 (strain S88 / ExPEC), this protein is Isopentenyl-diphosphate Delta-isomerase.